The primary structure comprises 338 residues: GTPase Obg (338 aa).

The Obg domain maps to M1 to M159. The segment at D58 to H79 is disordered. In terms of domain architecture, OBG-type G spans A160–W331. Residues G166–S173, F191–K195, D213–G216, N283–D286, and S312–A314 each bind GTP. Mg(2+) contacts are provided by S173 and T193.

This sequence belongs to the TRAFAC class OBG-HflX-like GTPase superfamily. OBG GTPase family. In terms of assembly, monomer. Mg(2+) serves as cofactor.

It localises to the cytoplasm. In terms of biological role, an essential GTPase which binds GTP, GDP and possibly (p)ppGpp with moderate affinity, with high nucleotide exchange rates and a fairly low GTP hydrolysis rate. Plays a role in control of the cell cycle, stress response, ribosome biogenesis and in those bacteria that undergo differentiation, in morphogenesis control. The protein is GTPase Obg of Citrifermentans bemidjiense (strain ATCC BAA-1014 / DSM 16622 / JCM 12645 / Bem) (Geobacter bemidjiensis).